The sequence spans 163 residues: Nucleotide-binding protein GWCH70_0711 (163 aa).

It belongs to the YajQ family.

In terms of biological role, nucleotide-binding protein. In Geobacillus sp. (strain WCH70), this protein is Nucleotide-binding protein GWCH70_0711.